A 215-amino-acid polypeptide reads, in one-letter code: Ribonuclease T (215 aa).

The 175-residue stretch at V20–F194 folds into the Exonuclease domain. D23, E25, H181, and D186 together coordinate Mg(2+). H181 serves as the catalytic Proton donor/acceptor.

Belongs to the RNase T family. Homodimer. Mg(2+) is required as a cofactor.

Trims short 3' overhangs of a variety of RNA species, leaving a one or two nucleotide 3' overhang. Responsible for the end-turnover of tRNA: specifically removes the terminal AMP residue from uncharged tRNA (tRNA-C-C-A). Also appears to be involved in tRNA biosynthesis. The protein is Ribonuclease T of Klebsiella pneumoniae subsp. pneumoniae (strain ATCC 700721 / MGH 78578).